The primary structure comprises 104 residues: L-rhamnose mutarotase (104 aa).

Tyr18 serves as a coordination point for substrate. The active-site Proton donor is the His22. Residues Tyr41 and 76 to 77 (WW) contribute to the substrate site.

It belongs to the rhamnose mutarotase family. In terms of assembly, homodimer.

It localises to the cytoplasm. It carries out the reaction alpha-L-rhamnose = beta-L-rhamnose. It participates in carbohydrate metabolism; L-rhamnose metabolism. In terms of biological role, involved in the anomeric conversion of L-rhamnose. This chain is L-rhamnose mutarotase, found in Salmonella heidelberg (strain SL476).